We begin with the raw amino-acid sequence, 399 residues long: Methylthioribose kinase (399 aa).

ATP-binding positions include Asn40, Lys57, and 111-113 (EDL). Asp229 is a binding site for substrate. 246–248 (DAE) contacts ATP. Arg344 contributes to the substrate binding site.

It belongs to the methylthioribose kinase family. As to quaternary structure, homodimer.

It catalyses the reaction 5-(methylsulfanyl)-D-ribose + ATP = 5-(methylsulfanyl)-alpha-D-ribose 1-phosphate + ADP + H(+). The protein operates within amino-acid biosynthesis; L-methionine biosynthesis via salvage pathway; S-methyl-5-thio-alpha-D-ribose 1-phosphate from S-methyl-5'-thioadenosine (hydrolase route): step 2/2. Its function is as follows. Catalyzes the phosphorylation of methylthioribose into methylthioribose-1-phosphate. The polypeptide is Methylthioribose kinase (Citrobacter koseri (strain ATCC BAA-895 / CDC 4225-83 / SGSC4696)).